The chain runs to 640 residues: SUMO-activating enzyme subunit 2 (640 aa).

Residues 24 to 29, Asp48, 56 to 59, Lys72, 95 to 96, and 117 to 122 each bind ATP; these read GAGGIG, NLNR, SI, and DNRAAR. Zn(2+)-binding residues include Cys158 and Cys161. Residue Lys164 forms a Glycyl lysine isopeptide (Lys-Gly) (interchain with G-Cter in SUMO1) linkage. Cys173 (glycyl thioester intermediate) is an active-site residue. Lys190 participates in a covalent cross-link: Glycyl lysine isopeptide (Lys-Gly) (interchain with G-Cter in SUMO). The disordered stretch occupies residues 202–231; the sequence is ADQEVSPDRADPEAAWEPTEAEARARASNE. Ser207 is modified (phosphoserine). Over residues 222 to 231 the composition is skewed to basic and acidic residues; sequence AEARARASNE. Lys236 participates in a covalent cross-link: Glycyl lysine isopeptide (Lys-Gly) (interchain with G-Cter in SUMO1); alternate. Residues Lys236 and Lys257 each participate in a glycyl lysine isopeptide (Lys-Gly) (interchain with G-Cter in SUMO2); alternate cross-link. Residues Lys257 and Lys271 each participate in a glycyl lysine isopeptide (Lys-Gly) (interchain with G-Cter in SUMO); alternate cross-link. Position 271 is an N6-acetyllysine; alternate (Lys271). Lys275 is covalently cross-linked (Glycyl lysine isopeptide (Lys-Gly) (interchain with G-Cter in SUMO)). A Glycyl lysine isopeptide (Lys-Gly) (interchain with G-Cter in SUMO2) cross-link involves residue Lys371. A Glycyl lysine isopeptide (Lys-Gly) (interchain with G-Cter in SUMO1); alternate cross-link involves residue Lys420. Residue Lys420 forms a Glycyl lysine isopeptide (Lys-Gly) (interchain with G-Cter in SUMO2); alternate linkage. Cys441 and Cys444 together coordinate Zn(2+). Position 507 is a phosphoserine (Ser507). Lys540 is covalently cross-linked (Glycyl lysine isopeptide (Lys-Gly) (interchain with G-Cter in SUMO2)). Positions 551-563 are enriched in basic and acidic residues; that stretch reads PEKVGPKQAEDAA. The segment at 551-640 is disordered; that stretch reads PEKVGPKQAE…EELDDVIALD (90 aa). A compositionally biased stretch (polar residues) spans 565–582; it reads SITNGSDDGAQPSTSTAQ. Residues 583–597 are compositionally biased toward acidic residues; sequence EQDDVLIVDSDEEDS. Ser592 carries the phosphoserine modification. Positions 606 to 630 are enriched in basic and acidic residues; the sequence is EERSRKRKLDEKENLSAKRSRIEQK. Residue Lys611 forms a Glycyl lysine isopeptide (Lys-Gly) (interchain with G-Cter in SUMO) linkage. Lys613 is covalently cross-linked (Glycyl lysine isopeptide (Lys-Gly) (interchain with G-Cter in SUMO); alternate). Lys613 carries the post-translational modification N6-acetyllysine; alternate. Glycyl lysine isopeptide (Lys-Gly) (interchain with G-Cter in SUMO) cross-links involve residues Lys617 and Lys623. Positions 631–640 are enriched in acidic residues; it reads EELDDVIALD.

Belongs to the ubiquitin-activating E1 family. In terms of assembly, heterodimer of SAE1 and UBA2/SAE2. The heterodimer corresponds to the two domains that are encoded on a single polypeptide chain in ubiquitin-activating enzyme E1. Interacts with UBE2I. Sumoylated with SUMO1 and SUMO2/3 and by UBC9. Sumoylation at Lys-236 inhibits enzymatic activity. Sumoylation at the C-terminal lysine cluster plays an essential role in nuclear trafficking.

It localises to the cytoplasm. It is found in the nucleus. It functions in the pathway protein modification; protein sumoylation. Functionally, the heterodimer acts as an E1 ligase for SUMO1, SUMO2, SUMO3, and probably SUMO4. It mediates ATP-dependent activation of SUMO proteins followed by formation of a thioester bond between a SUMO protein and a conserved active site cysteine residue on UBA2/SAE2. The sequence is that of SUMO-activating enzyme subunit 2 (UBA2) from Homo sapiens (Human).